Reading from the N-terminus, the 310-residue chain is Iron ABC transporter substrate-binding lipoprotein MtsA (310 aa).

Residues 1 to 20 (MGKRMSLILGAFLSVFLLVA) form the signal peptide. Cys21 carries N-palmitoyl cysteine lipidation. The S-diacylglycerol cysteine moiety is linked to residue Cys21. Residues His68, His140, Glu206, and Asp281 each coordinate Fe(2+).

This sequence belongs to the bacterial solute-binding protein 9 family. Lipoprotein receptor antigen (Lrai) subfamily.

It is found in the cell membrane. Part of the ATP-binding cassette (ABC) transport system MtsABC involved in iron import. Binds iron with high affinity and specificity and delivers it to the membrane permease for translocation into the cytoplasm. Has low affinity for Zn(2+) and Cu(2+). The polypeptide is Iron ABC transporter substrate-binding lipoprotein MtsA (mtsA) (Streptococcus pyogenes serotype M1).